The chain runs to 560 residues: DNA ligase B (560 aa).

The active-site N6-AMP-lysine intermediate is Lys-124.

It belongs to the NAD-dependent DNA ligase family. LigB subfamily.

It catalyses the reaction NAD(+) + (deoxyribonucleotide)n-3'-hydroxyl + 5'-phospho-(deoxyribonucleotide)m = (deoxyribonucleotide)n+m + AMP + beta-nicotinamide D-nucleotide.. Its function is as follows. Catalyzes the formation of phosphodiester linkages between 5'-phosphoryl and 3'-hydroxyl groups in double-stranded DNA using NAD as a coenzyme and as the energy source for the reaction. This chain is DNA ligase B, found in Escherichia coli O7:K1 (strain IAI39 / ExPEC).